The primary structure comprises 122 residues: Cytochrome b-c1 complex subunit 7-2, mitochondrial (122 aa).

Belongs to the UQCRB/QCR7 family. In terms of assembly, component of the ubiquinol-cytochrome c oxidoreductase (cytochrome b-c1 complex, complex III, CIII), a multisubunit enzyme composed of 10 subunits. The complex is composed of 3 respiratory subunits cytochrome b (MT-CYB), cytochrome c1 (CYC1-1 or CYC1-2) and Rieske protein (UCR1-1 or UCR1-2), 2 core protein subunits MPPalpha1 (or MPPalpha2) and MPPB, and 5 low-molecular weight protein subunits QCR7-1 (or QCR7-2), UCRQ-1 (or UCRQ-2), QCR9, UCRY and probably QCR6-1 (or QCR6-2). The complex exists as an obligatory dimer and forms supercomplexes (SCs) in the inner mitochondrial membrane with NADH-ubiquinone oxidoreductase (complex I, CI), resulting in different assemblies (supercomplexes SCI(1)III(2) and SCI(2)III(4)).

The protein localises to the mitochondrion inner membrane. Functionally, component of the ubiquinol-cytochrome c oxidoreductase, a multisubunit transmembrane complex that is part of the mitochondrial electron transport chain which drives oxidative phosphorylation. The respiratory chain contains 3 multisubunit complexes succinate dehydrogenase (complex II, CII), ubiquinol-cytochrome c oxidoreductase (cytochrome b-c1 complex, complex III, CIII) and cytochrome c oxidase (complex IV, CIV), that cooperate to transfer electrons derived from NADH and succinate to molecular oxygen, creating an electrochemical gradient over the inner membrane that drives transmembrane transport and the ATP synthase. The cytochrome b-c1 complex catalyzes electron transfer from ubiquinol to cytochrome c, linking this redox reaction to translocation of protons across the mitochondrial inner membrane, with protons being carried across the membrane as hydrogens on the quinol. In the process called Q cycle, 2 protons are consumed from the matrix, 4 protons are released into the intermembrane space and 2 electrons are passed to cytochrome c. In Arabidopsis thaliana (Mouse-ear cress), this protein is Cytochrome b-c1 complex subunit 7-2, mitochondrial (QCR7-2).